The following is a 284-amino-acid chain: Lipase chaperone (284 aa).

A helical transmembrane segment spans residues 4–24; it reads IAWSLGILVTIGALCAIVWPS.

Belongs to the lipase chaperone family.

It localises to the cell inner membrane. Functionally, may be involved in the folding of the extracellular lipase during its passage through the periplasm. The sequence is that of Lipase chaperone (lifO) from Vibrio cholerae serotype O1 (strain ATCC 39315 / El Tor Inaba N16961).